Here is a 488-residue protein sequence, read N- to C-terminus: Bile acid receptor (488 aa).

Lys-133 is covalently cross-linked (Glycyl lysine isopeptide (Lys-Gly) (interchain with G-Cter in SUMO1)). Residues 135 to 210 constitute a DNA-binding region (nuclear receptor); that stretch reads DELCVVCGDR…MGMLAECMYT (76 aa). The NR C4-type zinc-finger motif lies at 138–158; that stretch reads CVVCGDRASGYHYNALTCEGC. Phosphoserine; by PKC/PRKCA is present on residues Ser-146 and Ser-165. Lys-168 is subject to N6-acetyllysine; by EP300. Residues 174-198 form an NR C4-type zinc finger; the sequence is CKNGGNCVMDMYMRRKCQECRLRKC. Residue Lys-221 is modified to N6-methyllysine; by SETD7. Residue Lys-228 is modified to N6-acetyllysine; by EP300. An NR LBD domain is found at 264–488; it reads DQQTLLDYIM…PLLCEIWDVQ (225 aa). Lys-291 is covalently cross-linked (Glycyl lysine isopeptide (Lys-Gly) (interchain with G-Cter in SUMO1)). Chenodeoxycholate contacts are provided by Arg-347, Tyr-377, and Tyr-385. Thr-458 carries the post-translational modification Phosphothreonine; by PKC/PRKCZ. Chenodeoxycholate is bound at residue His-463.

Belongs to the nuclear hormone receptor family. NR1 subfamily. Heterodimer with RXRA; the heterodimerization enhances the binding affinity for LXXLL motifs from coactivators. Binds DNA predominantly as a heterodimer with RXRA. After activation by agonist binding interacts with coactivators. Interacts with PPARGC1A, SMARCA4 and EP300. Interacts with NCOA1, NCOA2, CARM1, SETD7, PRMT1, GPS2, SMARCA4 and MED1. Interacts with XRCC5 and XRCC6; decreasing NR1H4/FXR transactivation activity towards ABCB11/BSEP. Interacts with PAGR1 and NCOA6; indicative for an association with an MLL2/MLL3 complex (ASCOM). Interacts with NR5A2. Acetylated by EP300. Lys-228 as is the major acetylation site for EP300; the dynamicly regulated acetylation inhibits heterodimerization with RXRA and transactivation activity. Deacetylated by SIRT1. Elevated acetylation levels are found in metabolic disease states (mouse models of obesity and type II diabetes). In terms of processing, methylation may increase transactivation of target genes. Post-translationally, phosphorylation by PKC/PRKCA increases transactivation activity by promoting association with PPARGC1A. Sumoylated upon ligand binding. In terms of tissue distribution, expressed in liver and kidney. Expressed in pancreatic beta cells and macrophages. Expressed in the villus epithelium in adult ileum, with highest expression in the intervillus regions. Expression in colon is reduced by inflammation.

The protein localises to the nucleus. Its function is as follows. Ligand-activated transcription factor. Receptor for bile acids (BAs) such as chenodeoxycholic acid (CDCA), lithocholic acid, deoxycholic acid (DCA) and allocholic acid (ACA). Plays a essential role in BA homeostasis through the regulation of genes involved in BA synthesis, conjugation and enterohepatic circulation. Also regulates lipid and glucose homeostasis and is involved in innate immune response. The FXR-RXR heterodimer binds predominantly to farnesoid X receptor response elements (FXREs) containing two inverted repeats of the consensus sequence 5'-AGGTCA-3' in which the monomers are spaced by 1 nucleotide (IR-1) but also to tandem repeat DR1 sites with lower affinity, and can be activated by either FXR or RXR-specific ligands. It is proposed that monomeric nuclear receptors such as NR5A2/LRH-1 bound to coregulatory nuclear responsive element (NRE) halfsites located in close proximity to FXREs modulate transcriptional activity. In the liver activates transcription of the corepressor NR0B2 thereby indirectly inhibiting CYP7A1 and CYP8B1 (involved in BA synthesis) implicating at least in part histone demethylase KDM1A resulting in epigenomic repression, and SLC10A1/NTCP (involved in hepatic uptake of conjugated BAs). Activates transcription of the repressor MAFG (involved in regulation of BA synthesis). Activates transcription of SLC27A5/BACS and BAAT (involved in BA conjugation), ABCB11/BSEP (involved in bile salt export) by directly recruiting histone methyltransferase CARM1, and ABCC2/MRP2 (involved in secretion of conjugated BAs) and ABCB4 (involved in secretion of phosphatidylcholine in the small intestine). In ileal enterocytes activates FABP6/IBABP (involved in cytosolic transport), SLC51A/OSTA and SLC51B/OSTB (involved in secretion of conjugated BAs to the portal blood), and repressor NR0B2/SHP thereby indirectly inhibiting SLC10A2/ASBT (involved in BA uptake). In the intestine activates FGF15 expression and secretion leading to hepatic CYP7A1 repression; the function also involves the coordinated induction of hepatic KLB/beta-klotho expression. Transcriptional activation of FABP6/IBAP and SCD1 but not of ABCB11 is isoform-specific. Regulates transcription of liver UGT2B4 and SULT2A1 involved in BA detoxification; binding to the UGT2B4 promoter seems to imply a monomeric transactivation independent of RXRA. Modulates lipid homeostasis by activating liver NR0B2/SHP-mediated repression of SREBF1 isoform SREBP-1C (involved in de novo lipogenesis), expression of PLTP (involved in HDL formation), SCARB1 (involved in HDL hepatic uptake), APOE, APOC1, APOC4, VLDLR and SDC1 (involved in the hepatic uptake of LDL and IDL remnants), and inhibiting expression of MTTP (involved in VLDL assembly). Increases expression of APOC2 (promoting lipoprotein lipase activity implicated in triglyceride clearance). Transrepresses APOA1 probably involving a monomeric competition with NR2A1 for binding to a DR1 element. Also reduces triglyceride clearance by inhibiting expression of ANGPTL3 and APOC3 (both involved in inhibition of lipoprotein lipase). Involved in glucose homeostasis by modulating hepatic gluconeogenesis through activation of NR0B2/SHP-mediated repression of respective genes. Modulates glycogen synthesis (inducing phosphorylation of glycogen synthase kinase-3). Modulates glucose-stimulated insulin secretion and is involved in insulin resistance. Involved in intestinal innate immunity. Plays a role in protecting the distal small intestine against bacterial overgrowth and preservation of the epithelial barrier. Down-regulates inflammatory cytokine expression in several types of immune cells including macrophages and mononuclear cells. Mediates transrepression of TLR4-induced cytokine expression; the function seems to require its sumoylation and prevents N-CoR nuclear receptor corepressor clearance from target genes such as IL1B and NOS2. Involved in the TLR9-mediated protective mechanism in intestinal inflammation. Plays a anti-inflammatory role in liver inflammation; proposed to inhibit pro-inflammatory (but not antiapoptotic) NF-kappa-B signaling. Activates transcription of IBAP and SDC1. In Mus musculus (Mouse), this protein is Bile acid receptor (Nr1h4).